The chain runs to 292 residues: MKLAILSRNSTLYSTRRLVEAARARGHTVRILDPLRCYMRIAADGFSMHYKGRPMTGVDMVIPRIGASITRYGTAVLRQFELMGARTPNPSDAILRSRDKLRAHQLLAAKGIDMPVTVFGDNPDDTVDLLSMLGPPPHVVKLNEGTQGRGVILTEKASASRGIVEALRGLYANFLMQEFIGEAKGADLRCFVVGDQVVASMQRQAPEGDFRSNLHAGGTAVAAKASRAEQQVAVRSAKALGLSVCGVDLIRSARGPLVLEINSTPGLEGIEAACGVDVATRIIEHVEKLRKP.

Residues 104 to 287 enclose the ATP-grasp domain; sequence HQLLAAKGID…VATRIIEHVE (184 aa). Residues lysine 141, 178 to 179, aspartate 187, and 211 to 213 contribute to the ATP site; these read EF and RSN. Residues aspartate 248, glutamate 260, and asparagine 262 each coordinate Mg(2+). Mn(2+) is bound by residues aspartate 248, glutamate 260, and asparagine 262.

Belongs to the RimK family. It depends on Mg(2+) as a cofactor. Mn(2+) is required as a cofactor.

In Stenotrophomonas maltophilia (strain R551-3), this protein is Probable alpha-L-glutamate ligase.